We begin with the raw amino-acid sequence, 179 residues long: Ribosome maturation factor RimM (179 aa).

The PRC barrel domain occupies 101 to 179 (EGEVYVHDLC…VELMHRWILE (79 aa)).

Belongs to the RimM family. As to quaternary structure, binds ribosomal protein uS19.

The protein resides in the cytoplasm. Its function is as follows. An accessory protein needed during the final step in the assembly of 30S ribosomal subunit, possibly for assembly of the head region. Essential for efficient processing of 16S rRNA. May be needed both before and after RbfA during the maturation of 16S rRNA. It has affinity for free ribosomal 30S subunits but not for 70S ribosomes. The protein is Ribosome maturation factor RimM of Treponema denticola (strain ATCC 35405 / DSM 14222 / CIP 103919 / JCM 8153 / KCTC 15104).